The primary structure comprises 106 residues: Serine rich endogenous peptide 7 (106 aa).

Positions 1-26 are cleaved as a signal peptide; the sequence is MGKKCSSKFRQMLVLVLLLIVFTCLS. Basic and acidic residues-rich tracts occupy residues 46–56 and 65–77; these read GIEDEGQERTH and RSVE…EGRR. A disordered region spans residues 46-106; that stretch reads GIEDEGQERT…GGGRIPVAAS (61 aa). 2 short sequence motifs (SCOOP motif) span residues 58-72 and 86-100; these read LNSK…KTHH and GIRA…GGGR. Short sequence motifs (sxS motif essential for MIK2 binding) lie at residues 64–66 and 92–94; these read SRS and SKS.

The protein belongs to the serine rich endogenous peptide (SCOOP) phytocytokine family. Interacts with MIK2 (via extracellular leucine-rich repeat domain); this interaction triggers the formation of complex between MIK2 and the BAK1/SERK3 and SERK4 coreceptors, and subsequent BAK1 activation by phosphorylation. In terms of tissue distribution, mostly expressed in roots, and, to a lower extent, in seedlings shoots.

The protein resides in the cell membrane. It is found in the secreted. Its subcellular location is the extracellular space. The protein localises to the apoplast. Its function is as follows. Brassicaceae-specific phytocytokine (plant endogenous peptide released into the apoplast) perceived by MIK2 in a BAK1/SERK3 and SERK4 coreceptors-dependent manner, that modulates various physiological and antimicrobial processes including growth prevention and reactive oxygen species (ROS) response regulation. This Arabidopsis thaliana (Mouse-ear cress) protein is Serine rich endogenous peptide 7.